The chain runs to 118 residues: Large ribosomal subunit protein bL20 (118 aa).

The protein belongs to the bacterial ribosomal protein bL20 family.

Its function is as follows. Binds directly to 23S ribosomal RNA and is necessary for the in vitro assembly process of the 50S ribosomal subunit. It is not involved in the protein synthesizing functions of that subunit. The sequence is that of Large ribosomal subunit protein bL20 from Aliarcobacter butzleri (strain RM4018) (Arcobacter butzleri).